We begin with the raw amino-acid sequence, 207 residues long: Ribosomal RNA large subunit methyltransferase E (207 aa).

G49, W51, D69, D87, and D111 together coordinate S-adenosyl-L-methionine. The active-site Proton acceptor is the K151.

Belongs to the class I-like SAM-binding methyltransferase superfamily. RNA methyltransferase RlmE family.

The protein localises to the cytoplasm. It catalyses the reaction uridine(2552) in 23S rRNA + S-adenosyl-L-methionine = 2'-O-methyluridine(2552) in 23S rRNA + S-adenosyl-L-homocysteine + H(+). Specifically methylates the uridine in position 2552 of 23S rRNA at the 2'-O position of the ribose in the fully assembled 50S ribosomal subunit. The protein is Ribosomal RNA large subunit methyltransferase E of Oleidesulfovibrio alaskensis (strain ATCC BAA-1058 / DSM 17464 / G20) (Desulfovibrio alaskensis).